The primary structure comprises 481 residues: Matrix metalloproteinase-20 (481 aa).

An N-terminal signal peptide occupies residues 1-20 (MLPASGLAVLLVTALKFSTA). Residues 21-105 (APSLPAASPR…PRCGVPDVAN (85 aa)) constitute a propeptide that is removed on maturation. Asn64 carries N-linked (GlcNAc...) asparagine glycosylation. A Cysteine switch motif is present at residues 96 to 103 (PRCGVPDV). Cys98 is a Zn(2+) binding site. Positions 162, 163, and 164 each coordinate Ca(2+). Positions 174 and 176 each coordinate Zn(2+). Asp181, Gly182, Arg184, and Thr186 together coordinate Ca(2+). Residue His189 coordinates Zn(2+). The Ca(2+) site is built by Glu195, Gly196, Gly198, and Asp200. Residue His202 participates in Zn(2+) binding. Ca(2+)-binding residues include Asp204 and Glu207. His224 serves as a coordination point for Zn(2+). Residue Glu225 is part of the active site. Zn(2+) contacts are provided by His228 and His234. 4 Hemopexin repeats span residues 291–341 (PDLC…FPQL), 342–387 (MSNV…GFPR), 389–437 (VQRI…FSGV), and 438–481 (NGQI…WIGC). Cys294 and Cys481 are disulfide-bonded. The N-linked (GlcNAc...) asparagine glycan is linked to Asn297.

Belongs to the peptidase M10A family. Zn(2+) serves as cofactor. Requires Ca(2+) as cofactor. In terms of processing, autoactivates at least at the 105-Asn-|-Tyr-106 site. Expressed in the enamel organ.

It localises to the secreted. The protein resides in the extracellular space. The protein localises to the extracellular matrix. In terms of biological role, degrades amelogenin, the major protein component of the enamel matrix and two of the macromolecules characterizing the cartilage extracellular matrix: aggrecan and the cartilage oligomeric matrix protein (COMP). May play a central role in tooth enamel formation. Cleaves aggrecan at the '360-Ser-|-Phe-361' site. The sequence is that of Matrix metalloproteinase-20 (MMP20) from Bos taurus (Bovine).